Reading from the N-terminus, the 313-residue chain is 2,3-dihydroxyphenylpropionate/2,3-dihydroxicinnamic acid 1,2-dioxygenase (313 aa).

His116 serves as the catalytic Proton donor. The active-site Proton acceptor is His180.

Belongs to the LigB/MhpB extradiol dioxygenase family. As to quaternary structure, homotetramer. It depends on Fe(2+) as a cofactor.

The catalysed reaction is 3-(2,3-dihydroxyphenyl)propanoate + O2 = (2Z,4E)-2-hydroxy-6-oxonona-2,4-dienedioate + H(+). The enzyme catalyses (2E)-3-(2,3-dihydroxyphenyl)prop-2-enoate + O2 = (2Z,4E,7E)-2-hydroxy-6-oxonona-2,4,7-trienedioate + H(+). The protein operates within aromatic compound metabolism; 3-phenylpropanoate degradation. In terms of biological role, catalyzes the non-heme iron(II)-dependent oxidative cleavage of 2,3-dihydroxyphenylpropionic acid and 2,3-dihydroxicinnamic acid into 2-hydroxy-6-ketononadienedioate and 2-hydroxy-6-ketononatrienedioate, respectively. This is 2,3-dihydroxyphenylpropionate/2,3-dihydroxicinnamic acid 1,2-dioxygenase from Mycobacterium sp. (strain MCS).